The following is a 282-amino-acid chain: Cuticle collagen 8 (282 aa).

The N-terminal stretch at 1–24 (MLVCVFVALYTMMGLLTDIKQLQS) is a signal peptide. Residues 86-282 (GPKSEGCPAG…CPCPGRSYKA (197 aa)) form a disordered region. Triple-helical region stretches follow at residues 95 to 124 (GPPGPPGEGGQSGEPGHDGDDGKPGAPGVI) and 141 to 269 (GRPG…PGPD). Gly residues predominate over residues 170–180 (TGGQGGPGEQG). Residues 214-224 (PPGPRGPPGPE) are compositionally biased toward pro residues. Residues 225–234 (GNPGGAGEDG) are compositionally biased toward gly residues. The segment covering 235–244 (NQGPVGHPGV) has biased composition (low complexity).

Belongs to the cuticular collagen family. Collagen polypeptide chains are complexed within the cuticle by disulfide bonds and other types of covalent cross-links.

Nematode cuticles are composed largely of collagen-like proteins. The cuticle functions both as an exoskeleton and as a barrier to protect the worm from its environment. The sequence is that of Cuticle collagen 8 (col-8) from Caenorhabditis elegans.